Here is a 140-residue protein sequence, read N- to C-terminus: Cystatin-C (140 aa).

A signal peptide spans 1–20; it reads MASPLRSLMLLLAVLAVAWA. A Secondary area of contact motif is present at residues 75–79; the sequence is QLVAG. 2 cysteine pairs are disulfide-bonded: C93–C103 and C117–C137. N-linked (GlcNAc...) asparagine glycosylation is present at N99.

This sequence belongs to the cystatin family.

It is found in the secreted. In terms of biological role, as an inhibitor of cysteine proteinases, this protein is thought to serve an important physiological role as a local regulator of this enzyme activity. Known to inhibit cathepsin B, H, and L. This Rattus norvegicus (Rat) protein is Cystatin-C (Cst3).